The chain runs to 347 residues: MQYTLKQISEHLNAKVINEPSGEVIITGLNYAEQAKENDLTLIDKQEHIKLWQNSKAAAAIVSKKISKELAQVNDKPLIVVNNADLAMAKILELFSVPYPEQNGIHEKAVIDPTAKIGKNVSIGPGAYIGKNVEIGDNTIIYANVCIYNDAKVGTNCIIWPSVTIRDRTIIDHFCRLYSNCSIGSDGFGYRPSEDGRTIVRIPHIGNVVIGSFVDIGSNTCINNAKYGSTIIGDYTKIDNLVQIGHNVIIGKGCMICGQAGISGSVTIGDGVIIAGNAGIKDHTNIGSDARIGGKAGVMWDVPAGESHMGYPAYKDSELAKQWIAIRKLPETMKKLKAIAKSLNIDL.

Histidine 246 acts as the Proton acceptor in catalysis.

The protein belongs to the transferase hexapeptide repeat family. LpxD subfamily. In terms of assembly, homotrimer.

It carries out the reaction a UDP-3-O-[(3R)-3-hydroxyacyl]-alpha-D-glucosamine + a (3R)-hydroxyacyl-[ACP] = a UDP-2-N,3-O-bis[(3R)-3-hydroxyacyl]-alpha-D-glucosamine + holo-[ACP] + H(+). Its pathway is bacterial outer membrane biogenesis; LPS lipid A biosynthesis. Catalyzes the N-acylation of UDP-3-O-acylglucosamine using 3-hydroxyacyl-ACP as the acyl donor. Is involved in the biosynthesis of lipid A, a phosphorylated glycolipid that anchors the lipopolysaccharide to the outer membrane of the cell. This chain is UDP-3-O-acylglucosamine N-acyltransferase 1, found in Francisella tularensis subsp. holarctica (strain LVS).